The following is a 428-amino-acid chain: Stromal membrane-associated protein 2 (428 aa).

Positions 13-139 (QAVLGSLLSE…INTFRKEKDD (127 aa)) constitute an Arf-GAP domain. The segment at 28 to 51 (CADCQAKGPRWASWNIGVFICIRC) adopts a C4-type zinc-finger fold. The span at 161-172 (VKMPQKKEETQQ) shows a compositional bias: basic and acidic residues. Disordered stretches follow at residues 161–182 (VKMP…KSTE) and 222–258 (SRKV…AGKK).

As to quaternary structure, may interact with clathrin heavy chains.

In terms of biological role, GTPase activating protein. May play a role in clathrin-dependent retrograde transport from early endosomes to the trans-Golgi network. This Gallus gallus (Chicken) protein is Stromal membrane-associated protein 2 (SMAP2).